Here is a 646-residue protein sequence, read N- to C-terminus: Sulfate transporter 3.2 (646 aa).

Over 1 to 76 the chain is Cytoplasmic; sequence MSSKRASQYH…GYSLEYLKSD (76 aa). The chain crosses the membrane as a helical span at residues 77–97; that stretch reads VISGITIASLAIPQGISYAQL. At 98–99 the chain is on the extracellular side; that stretch reads AN. Residues 100–120 form a helical membrane-spanning segment; sequence LPPILGLYSSLVPPLVYAIMG. The Cytoplasmic portion of the chain corresponds to 121–124; that stretch reads SSRD. A helical membrane pass occupies residues 125–145; it reads LAVGTVAVASLLTAAMLGKEV. Topologically, residues 146–154 are extracellular; that stretch reads NAVVNPKLY. Residues 155–175 form a helical membrane-spanning segment; that stretch reads LHLAFTATFFAGLMQTCLGLL. Position 176 (R176) is a topological domain, cytoplasmic. A helical transmembrane segment spans residues 177-197; that stretch reads LGFVVEILSHAAIVGFMGGAA. Residues 198–235 are Extracellular-facing; sequence TVVCLQQLKGLLGLHHFTHSTDIVTVLRSIFSQSHMWR. Residues 236 to 256 form a helical membrane-spanning segment; it reads WESGVLGCCFLIFLLTTKYIS. Over 257–262 the chain is Cytoplasmic; that stretch reads KKRPKL. The helical transmembrane segment at 263 to 283 threads the bilayer; sequence FWISAMSPLVSVIFGTIFLYF. Topologically, residues 284 to 315 are extracellular; sequence LHDQFHGIQFIGELKKGINPPSITHLVFTPPY. The helical transmembrane segment at 316–336 threads the bilayer; the sequence is VMLALKVGIITGVIALAEGIA. Residues 337–354 lie on the Cytoplasmic side of the membrane; it reads VGRSFAMYKNYNIDGNKE. Residues 355 to 375 form a helical membrane-spanning segment; sequence MIAFGMMNILGSFSSCYLTTG. Residues 376 to 390 lie on the Extracellular side of the membrane; sequence PFSRSAVNYNAGCKT. The next 2 membrane-spanning stretches (helical) occupy residues 391-411 and 412-432; these read ALSNVVMAVAVAVTLLFLTPL and FFYTPLVVLSSIIIAAMLGLV. At 433-447 the chain is on the extracellular side; that stretch reads DYEAAIHLWKLDKFD. A helical membrane pass occupies residues 448–468; sequence FFVCLSAYLGVVFGTIEIGLI. The Cytoplasmic segment spans residues 469 to 646; sequence LSVGISVMRL…DSPVPEFNNV (178 aa). The 124-residue stretch at 504 to 627 folds into the STAS domain; sequence HYPQAITRSS…LTVAEAVAAC (124 aa).

It belongs to the SLC26A/SulP transporter (TC 2.A.53) family. In terms of tissue distribution, expressed only in leaves.

The protein resides in the membrane. H(+)/sulfate cotransporter that may play a role in the regulation of sulfate assimilation. The protein is Sulfate transporter 3.2 (SULTR3;2) of Arabidopsis thaliana (Mouse-ear cress).